We begin with the raw amino-acid sequence, 72 residues long: Disintegrin basilicin (72 aa).

Residues 1-72 form the Disintegrin domain; the sequence is AGEECDCGSP…ADCPRNHFHA (72 aa). Cystine bridges form between cysteine 5-cysteine 20, cysteine 7-cysteine 15, cysteine 14-cysteine 37, cysteine 28-cysteine 34, cysteine 33-cysteine 58, and cysteine 46-cysteine 65. Positions 50–52 match the Cell attachment site motif; the sequence is RGD.

Belongs to the venom metalloproteinase (M12B) family. P-II subfamily. P-IIa sub-subfamily. As to quaternary structure, monomer (disintegrin). As to expression, expressed by the venom gland.

The protein resides in the secreted. Functionally, inhibits fibrinogen interaction with platelets. Acts by binding to alpha-IIb/beta-3 (ITGA2B/ITGB3) on the platelet surface and inhibits aggregation induced by ADP, thrombin, platelet-activating factor and collagen. In Crotalus basiliscus (Mexican west-coast rattlesnake), this protein is Disintegrin basilicin.